A 444-amino-acid polypeptide reads, in one-letter code: Tubulin beta chain (444 aa).

The short motif at 1–4 (MREI) is the MREI motif element. Residue Gln11 participates in GTP binding. Residue Ser40 is modified to Phosphoserine. Thr55 carries the post-translational modification Phosphothreonine. Lys58 is modified (N6-acetyllysine; alternate). An N6-succinyllysine; alternate modification is found at Lys58. Residue Lys58 forms a Glycyl lysine isopeptide (Lys-Gly) (interchain with G-Cter in ubiquitin); alternate linkage. GTP contacts are provided by Glu69, Ser138, Gly142, Thr143, and Gly144. Position 69 (Glu69) interacts with Mg(2+). At Ser172 the chain carries Phosphoserine; by CDK1. GTP is bound by residues Asn204 and Asn226. Phosphothreonine occurs at positions 285 and 290. An Omega-N-methylarginine modification is found at Arg318. Lys324 participates in a covalent cross-link: Glycyl lysine isopeptide (Lys-Gly) (interchain with G-Cter in ubiquitin). The interval 423–444 (QQYQDATAEEEEDFGEEAEEEA) is disordered. Over residues 429–444 (TAEEEEDFGEEAEEEA) the composition is skewed to acidic residues. 5-glutamyl polyglutamate is present on residues Glu434, Glu438, Glu439, and Glu441. A 5-glutamyl glycine mark is found at Glu438, Glu439, Glu441, Glu442, and Glu443.

This sequence belongs to the tubulin family. As to quaternary structure, heterodimer of alpha and beta chains. A typical microtubule is a hollow water-filled tube with an outer diameter of 25 nm and an inner diameter of 15 nM. Alpha-beta heterodimers associate head-to-tail to form protofilaments running lengthwise along the microtubule wall with the beta-tubulin subunit facing the microtubule plus end conferring a structural polarity. Microtubules usually have 13 protofilaments but different protofilament numbers can be found in some organisms and specialized cells. Interacts with CIMAP3. Interacts with DIAPH1. Interacts with MX1. May interact with RNABP10. Interacts with CFAP157. Nascent tubulin polypeptide interacts (via beta-tubulin MREI motif) with TTC5/STRAP; this interaction results in tubulin mRNA-targeted degradation. The cofactor is Mg(2+). Post-translationally, some glutamate residues at the C-terminus are polyglycylated, resulting in polyglycine chains on the gamma-carboxyl group. Glycylation is mainly limited to tubulin incorporated into axonemes (cilia and flagella) whereas glutamylation is prevalent in neuronal cells, centrioles, axonemes, and the mitotic spindle. Both modifications can coexist on the same protein on adjacent residues, and lowering polyglycylation levels increases polyglutamylation, and reciprocally. Cilia and flagella glycylation is required for their stability and maintenance. Flagella glycylation controls sperm motility. In terms of processing, some glutamate residues at the C-terminus are polyglutamylated, resulting in polyglutamate chains on the gamma-carboxyl group. Polyglutamylation plays a key role in microtubule severing by spastin (SPAST). SPAST preferentially recognizes and acts on microtubules decorated with short polyglutamate tails: severing activity by SPAST increases as the number of glutamates per tubulin rises from one to eight, but decreases beyond this glutamylation threshold. Glutamylation is also involved in cilia motility. Phosphorylated on Ser-172 by CDK1 during the cell cycle, from metaphase to telophase, but not in interphase. This phosphorylation inhibits tubulin incorporation into microtubules.

The protein resides in the cytoplasm. Its subcellular location is the cytoskeleton. Tubulin is the major constituent of microtubules, a cylinder consisting of laterally associated linear protofilaments composed of alpha- and beta-tubulin heterodimers. Microtubules grow by the addition of GTP-tubulin dimers to the microtubule end, where a stabilizing cap forms. Below the cap, tubulin dimers are in GDP-bound state, owing to GTPase activity of alpha-tubulin. This Sus scrofa (Pig) protein is Tubulin beta chain (TUBB).